Reading from the N-terminus, the 68-residue chain is Large ribosomal subunit protein uL29 (68 aa).

It belongs to the universal ribosomal protein uL29 family.

The chain is Large ribosomal subunit protein uL29 from Picosynechococcus sp. (strain ATCC 27264 / PCC 7002 / PR-6) (Agmenellum quadruplicatum).